We begin with the raw amino-acid sequence, 688 residues long: NADH-ubiquinone oxidoreductase 75 kDa subunit (688 aa).

The 85-residue stretch at 1-85 (MIIRFKINEI…DESIETEIDE (85 aa)) folds into the 2Fe-2S ferredoxin-type domain. [2Fe-2S] cluster contacts are provided by Cys-38, Cys-49, Cys-52, and Cys-66. In terms of domain architecture, 4Fe-4S His(Cys)3-ligated-type spans 85 to 124 (EILKAREGVMEFLLINHPLDCPICDQGGECDLQEQTLAYG). Positions 101, 105, 108, 114, 153, 156, 159, and 204 each coordinate [4Fe-4S] cluster. Positions 223–279 (LKNIKGIDIFDTLLTPINYQVKGGEIFRILPRINDRINEEWITDKVRFHYESYKIIE) constitute a 4Fe-4S Mo/W bis-MGD-type domain.

The protein belongs to the complex I 75 kDa subunit family. In terms of assembly, complex I is composed of about 45 different subunits. [2Fe-2S] cluster is required as a cofactor. Requires [4Fe-4S] cluster as cofactor.

It localises to the mitochondrion inner membrane. It carries out the reaction a ubiquinone + NADH + 5 H(+)(in) = a ubiquinol + NAD(+) + 4 H(+)(out). Functionally, core subunit of the mitochondrial membrane respiratory chain NADH dehydrogenase (Complex I) that is believed to belong to the minimal assembly required for catalysis. Complex I functions in the transfer of electrons from NADH to the respiratory chain. The immediate electron acceptor for the enzyme is believed to be ubiquinone. This is the largest subunit of complex I and it is a component of the iron-sulfur (IP) fragment of the enzyme. It may form part of the active site crevice where NADH is oxidized. The protein is NADH-ubiquinone oxidoreductase 75 kDa subunit (nad11) of Dictyostelium discoideum (Social amoeba).